We begin with the raw amino-acid sequence, 385 residues long: MAAVESRVCETEGCSSEAKLQCPTCIKLGIQGSYFCSQECFKGSWATHKLLHKKAKDDKIKPEVSPWTMDGEVNTDPWPGYRYTGKLRPHYPLTPMRPVPSYIQRPDYADHPLGMSESEQTLKGTSQIKTLSPEDIEGMRVVCRLAREVLGVAAMMVKSGITTEEIDHAVHLACISRNCYPSPLNYYNFPKSCCTSVNEVICHGIPDRRPLQDGDIVNVDITVYRDGYHGDLNETFYVGDVDEGAKRLVETTYECLMQAIDEVKPGVRYRELGNIIQKHAQANGFSIVRSYCGHGIHKLFHTAPNVPHYGKNKAVGVMKPGHVFTIEPMICEGGWQDETWPDGWTAITRDGKRSAQFEHTLLVTETGCEILTCRLEENGRPYFIS.

A C6H2-type zinc finger spans residues 6 to 59; sequence SRVCETEGCSSEAKLQCPTCIKLGIQGSYFCSQECFKGSWATHKLLHKKAKDDK. Residues Cys9, Cys14, Cys22, Cys25, Cys36, Cys40, His48, and His52 each coordinate Zn(2+). An a protein-binding site is contributed by His203. Zn(2+)-binding residues include Asp220, Asp231, and His294. His301 is an a protein binding site. 2 residues coordinate Zn(2+): Glu327 and Glu358.

Belongs to the peptidase M24A family. Methionine aminopeptidase type 1 subfamily. In terms of assembly, associates with the 60S ribosomal subunit of the 80S translational complex. The cofactor is Zn(2+). Co(2+) serves as cofactor. Mn(2+) is required as a cofactor. It depends on Fe(2+) as a cofactor.

It is found in the cytoplasm. It carries out the reaction Release of N-terminal amino acids, preferentially methionine, from peptides and arylamides.. Its function is as follows. Cotranslationally removes the N-terminal methionine from nascent proteins. The N-terminal methionine is often cleaved when the second residue in the primary sequence is small and uncharged (Met-Ala-, Cys, Gly, Pro, Ser, Thr, or Val). In Xenopus laevis (African clawed frog), this protein is Methionine aminopeptidase 1 (metap1).